We begin with the raw amino-acid sequence, 361 residues long: MKFGWIKTTGNDSEERIDSVKDALESSIPGILVKREEINSVRELGNIKIVSDSLDADVVLINKGEDLEILKSAKLSGKETAVYVVINTKDDEIYATEVSKLDFVDYVILEGSDWTIIPLENIIADLFGEEIKLVSVVTNVKDAEAAYEILEKGVDGVVLIPKDINEVKDFSKLIERMNSESVKLDYATVTKIEPVGSGDRVCIDTCSMMEMGEGMLIGSYSRGMFLVHSETVENPYVATRPFRVNAGPVHAYILCPENKTKYLSDLKAGDKVLVVNKNGETRESIIGRVKIEKRPLFLVEAEYNGENLRTILQNAETIRLVGEDGKPVSVVDLKVGTKVLIKPDENARHFGMAIKETIIEK.

It belongs to the archaeal-type DHQ synthase family.

It catalyses the reaction 2-amino-2,3,7-trideoxy-D-lyxo-hept-6-ulosonate + NAD(+) + H2O = 3-dehydroquinate + NH4(+) + NADH + H(+). Functionally, catalyzes the oxidative deamination and cyclization of 2-amino-3,7-dideoxy-D-threo-hept-6-ulosonic acid (ADH) to yield 3-dehydroquinate (DHQ), which is fed into the canonical shikimic pathway of aromatic amino acid biosynthesis. The sequence is that of 3-dehydroquinate synthase from Methanococcus maripaludis (strain C7 / ATCC BAA-1331).